We begin with the raw amino-acid sequence, 135 residues long: DNA-binding protein H-NS homolog (135 aa).

Residues 112 to 117 (QGRTPS) mediate DNA binding.

Belongs to the histone-like protein H-NS family. As to quaternary structure, homodimer that oligomerizes on DNA into higher-order complexes that form bridges between disparate regions of DNA compacting it.

The protein localises to the cytoplasm. It is found in the nucleoid. Functionally, a DNA-binding protein implicated in transcriptional repression and chromosome organization and compaction. Binds nucleation sites in AT-rich DNA and bridges them, forming higher-order nucleoprotein complexes and condensing the chromosome. A subset of genes are repressed by H-NS in association with other proteins. The chain is DNA-binding protein H-NS homolog (hns) from Buchnera aphidicola subsp. Acyrthosiphon pisum (strain APS) (Acyrthosiphon pisum symbiotic bacterium).